The chain runs to 481 residues: Methylenetetrahydrofolate--tRNA-(uracil-5-)-methyltransferase TrmFO (481 aa).

13–18 (GGGLAG) contributes to the FAD binding site.

It belongs to the MnmG family. TrmFO subfamily. The cofactor is FAD.

It localises to the cytoplasm. It catalyses the reaction uridine(54) in tRNA + (6R)-5,10-methylene-5,6,7,8-tetrahydrofolate + NADH + H(+) = 5-methyluridine(54) in tRNA + (6S)-5,6,7,8-tetrahydrofolate + NAD(+). The enzyme catalyses uridine(54) in tRNA + (6R)-5,10-methylene-5,6,7,8-tetrahydrofolate + NADPH + H(+) = 5-methyluridine(54) in tRNA + (6S)-5,6,7,8-tetrahydrofolate + NADP(+). Functionally, catalyzes the folate-dependent formation of 5-methyl-uridine at position 54 (M-5-U54) in all tRNAs. The chain is Methylenetetrahydrofolate--tRNA-(uracil-5-)-methyltransferase TrmFO from Agrobacterium fabrum (strain C58 / ATCC 33970) (Agrobacterium tumefaciens (strain C58)).